The chain runs to 128 residues: Large ribosomal subunit protein uL22 (128 aa).

The protein belongs to the universal ribosomal protein uL22 family. As to quaternary structure, part of the 50S ribosomal subunit.

Functionally, this protein binds specifically to 23S rRNA; its binding is stimulated by other ribosomal proteins, e.g. L4, L17, and L20. It is important during the early stages of 50S assembly. It makes multiple contacts with different domains of the 23S rRNA in the assembled 50S subunit and ribosome. Its function is as follows. The globular domain of the protein is located near the polypeptide exit tunnel on the outside of the subunit, while an extended beta-hairpin is found that lines the wall of the exit tunnel in the center of the 70S ribosome. This chain is Large ribosomal subunit protein uL22, found in Rhodopseudomonas palustris (strain BisA53).